The following is a 488-amino-acid chain: Putative serine carboxypeptidase-like 30 (488 aa).

The N-terminal stretch at 1 to 28 is a signal peptide; the sequence is MDNHTKSFSSLLISLWFTALLILVEMVS. Cystine bridges form between Cys99/Cys368, Cys262/Cys275, and Cys299/Cys336. Asn150 is a glycosylation site (N-linked (GlcNAc...) asparagine). The active site involves Ser192. Asn263 carries an N-linked (GlcNAc...) asparagine glycan. 2 N-linked (GlcNAc...) asparagine glycosylation sites follow: Asn364 and Asn375. Residues Asp405 and His457 contribute to the active site.

This sequence belongs to the peptidase S10 family. As to expression, expression not detected.

It is found in the secreted. In terms of biological role, probable carboxypeptidase. The polypeptide is Putative serine carboxypeptidase-like 30 (SCPL30) (Arabidopsis thaliana (Mouse-ear cress)).